A 229-amino-acid polypeptide reads, in one-letter code: Cytidylate kinase (229 aa).

Residue 10–18 (GFSSCGKST) participates in ATP binding.

This sequence belongs to the cytidylate kinase family. Type 1 subfamily.

It localises to the cytoplasm. It catalyses the reaction CMP + ATP = CDP + ADP. The catalysed reaction is dCMP + ATP = dCDP + ADP. This Bacteroides thetaiotaomicron (strain ATCC 29148 / DSM 2079 / JCM 5827 / CCUG 10774 / NCTC 10582 / VPI-5482 / E50) protein is Cytidylate kinase.